Consider the following 458-residue polypeptide: NADH-quinone oxidoreductase subunit N (458 aa).

14 consecutive transmembrane segments (helical) span residues Leu-2–Leu-22, Ile-30–Ser-50, Gly-62–Ile-82, Ala-93–Ile-113, Phe-118–Phe-138, Phe-153–Phe-173, Leu-196–Leu-216, Phe-235–Ile-255, Ile-261–Ala-281, Leu-290–Asn-310, Leu-319–Phe-339, Ile-361–Phe-381, Phe-397–Val-417, and Leu-438–Phe-458.

It belongs to the complex I subunit 2 family. In terms of assembly, NDH-1 is composed of 14 different subunits. Subunits NuoA, H, J, K, L, M, N constitute the membrane sector of the complex.

It is found in the cell inner membrane. The catalysed reaction is a quinone + NADH + 5 H(+)(in) = a quinol + NAD(+) + 4 H(+)(out). Functionally, NDH-1 shuttles electrons from NADH, via FMN and iron-sulfur (Fe-S) centers, to quinones in the respiratory chain. The immediate electron acceptor for the enzyme in this species is believed to be ubiquinone. Couples the redox reaction to proton translocation (for every two electrons transferred, four hydrogen ions are translocated across the cytoplasmic membrane), and thus conserves the redox energy in a proton gradient. The chain is NADH-quinone oxidoreductase subunit N from Rickettsia typhi (strain ATCC VR-144 / Wilmington).